A 246-amino-acid polypeptide reads, in one-letter code: 5'-nucleotidase SurE (246 aa).

The a divalent metal cation site is built by Asp-8, Asp-9, Ser-39, and Asn-91.

This sequence belongs to the SurE nucleotidase family. Requires a divalent metal cation as cofactor.

It localises to the cytoplasm. It catalyses the reaction a ribonucleoside 5'-phosphate + H2O = a ribonucleoside + phosphate. In terms of biological role, nucleotidase that shows phosphatase activity on nucleoside 5'-monophosphates. The sequence is that of 5'-nucleotidase SurE from Dechloromonas aromatica (strain RCB).